Reading from the N-terminus, the 375-residue chain is Thioredoxin reductase 1, mitochondrial (375 aa).

The transit peptide at 1-37 (MNCVSRLKCLISKARSFARLGGESTLSQPPSLASAAF) directs the protein to the mitochondrion. Residues 58-61 (SGPA), 79-80 (FE), 87-92 (IAPGGQ), Asn-101, Val-134, Cys-192, Asp-337, and 344-346 (RQA) contribute to the FAD site. Cys-189 and Cys-192 are joined by a disulfide.

It belongs to the class-II pyridine nucleotide-disulfide oxidoreductase family. In terms of assembly, homodimer. The cofactor is FAD. In terms of tissue distribution, ubiquitous.

It is found in the cytoplasm. Its subcellular location is the mitochondrion. The catalysed reaction is [thioredoxin]-dithiol + NADP(+) = [thioredoxin]-disulfide + NADPH + H(+). In terms of biological role, NADPH-dependent thioredoxin-disulfide reductase that reduces thioredoxins O1, O2 and F3. The polypeptide is Thioredoxin reductase 1, mitochondrial (NTR1) (Arabidopsis thaliana (Mouse-ear cress)).